The sequence spans 119 residues: DNA-directed RNA polymerase subunit omega (119 aa).

It belongs to the RNA polymerase subunit omega family. As to quaternary structure, the RNAP catalytic core consists of 2 alpha, 1 beta, 1 beta' and 1 omega subunit. When a sigma factor is associated with the core the holoenzyme is formed, which can initiate transcription.

It catalyses the reaction RNA(n) + a ribonucleoside 5'-triphosphate = RNA(n+1) + diphosphate. Functionally, promotes RNA polymerase assembly. Latches the N- and C-terminal regions of the beta' subunit thereby facilitating its interaction with the beta and alpha subunits. In Caulobacter sp. (strain K31), this protein is DNA-directed RNA polymerase subunit omega.